We begin with the raw amino-acid sequence, 217 residues long: Guanylate kinase (217 aa).

One can recognise a Guanylate kinase-like domain in the interval 15–194 (GLMLVLSSPS…AYQRLKRILL (180 aa)). 22-29 (SPSGAGKT) lines the ATP pocket.

It belongs to the guanylate kinase family.

It localises to the cytoplasm. The catalysed reaction is GMP + ATP = GDP + ADP. Its function is as follows. Essential for recycling GMP and indirectly, cGMP. The sequence is that of Guanylate kinase from Hyphomonas neptunium (strain ATCC 15444).